The chain runs to 27 residues: GFGSLLGKALKAGLKLGANLLGGAPQQ.

As to expression, expressed by the skin glands.

The protein localises to the secreted. In terms of biological role, antimicrobial peptide. The sequence is that of Caerulein precursor fragment R2 from Xenopus ruwenzoriensis (Uganda clawed frog).